A 425-amino-acid chain; its full sequence is Malate transporter MleP (425 aa).

A run of 11 helical transmembrane segments spans residues 11–31, 35–55, 65–85, 96–116, 134–154, 196–216, 246–266, 269–289, 310–330, 339–359, and 401–421; these read GISL…TLLG, LDMV…YFIG, LGGG…FHIV, FMGG…CGSI, IALI…MLIG, IFSQ…IGAL, IKLD…LLMA, ILNK…IVFI, VIMT…LIDL, WQFV…SWFL, and FAQM…GILI.

It belongs to the 2-hydroxycarboxylate transporter (2-HCT) (TC 2.A.24) family.

It localises to the cell membrane. It carries out the reaction (S)-lactate(in) + (S)-malate(out) = (S)-lactate(out) + (S)-malate(in). It catalyses the reaction (R)-lactate(in) + (S)-malate(out) = (R)-lactate(out) + (S)-malate(in). The catalysed reaction is glycolate(in) + (S)-malate(out) = glycolate(out) + (S)-malate(in). In terms of biological role, secondary transporter involved in malolactic fermentation. Catalyzes the uptake of divalent malate into the cell coupled to the exit of monovalent lactate, a product of malate degradation (precursor/product exchange). The malate/lactate exchange is electrogenic and results in the generation of a membrane potential. Is highly selective for the S-enantiomer of malate. In the absence of lactate, MleP can also catalyze the proton-dependent transport of malate. In vitro, transports a range of substrates that contain the 2-hydroxycarboxylate motif, HO-CR(2)-COO(-), with a preference for malate, lactate and glycolate. Modification of the OH or the COO(-) groups of the 2-hydroxycarboxylate motif drastically reduces the affinity of the transporter for the substrates, indicating their relevance in substrate recognition. Significant activity is also observed with some 2-oxocarboxylates. Transports only poorly citromalate. Citrate binds to MleP but is not translocated. This chain is Malate transporter MleP, found in Lactococcus lactis subsp. lactis (strain IL1403) (Streptococcus lactis).